The primary structure comprises 1128 residues: Nck-associated protein 1 (1128 aa).

Ser-2 carries the post-translational modification N-acetylserine. A disordered region spans residues 640–665 (AVNKKSKKQTGKKGEPEREKPGVESM). Positions 651–665 (KKGEPEREKPGVESM) are enriched in basic and acidic residues. The chain crosses the membrane as a helical span at residues 995–1015 (IACLLMVFVAVSLPTLASNVM).

The protein belongs to the HEM-1/HEM-2 family. In terms of assembly, component of the WAVE1 complex composed of ABI2, CYFIP1 or CYFIP2, BRK1, NCKAP1 and WASF1/WAVE1. Within the complex, a heterodimer containing NCKAP1 and CYFIP1 interacts with a heterotrimer formed by WAVE1, ABI2 and BRK1. Component of the WAVE2 complex composed of ABI1, CYFIP1/SRA1, NCKAP1/NAP1 and WASF2/WAVE2. CYFIP2 binds to activated RAC1 which causes the complex to dissociate, releasing activated WASF1. The complex can also be activated by NCK1. Associates preferentially with the first SH3 domain of NCK. Interacts with NYAP1, NYAP2 and MYO16. Interacts with TMEM132D. As to expression, preferentially expressed in brain, heart, liver and testis.

The protein localises to the cell membrane. The protein resides in the cell projection. It localises to the lamellipodium membrane. Functionally, part of the WAVE complex that regulates lamellipodia formation. The WAVE complex regulates actin filament reorganization via its interaction with the Arp2/3 complex. Actin remodeling activity is regulated by RAC1. As component of the WAVE1 complex, required for BDNF-NTRK2 endocytic trafficking and signaling from early endosomes. The sequence is that of Nck-associated protein 1 (Nckap1) from Rattus norvegicus (Rat).